The following is a 150-amino-acid chain: D-aminoacyl-tRNA deacylase (150 aa).

The Gly-cisPro motif, important for rejection of L-amino acids signature appears at 138–139 (GP).

The protein belongs to the DTD family. Homodimer.

The protein localises to the cytoplasm. The catalysed reaction is glycyl-tRNA(Ala) + H2O = tRNA(Ala) + glycine + H(+). The enzyme catalyses a D-aminoacyl-tRNA + H2O = a tRNA + a D-alpha-amino acid + H(+). Its function is as follows. An aminoacyl-tRNA editing enzyme that deacylates mischarged D-aminoacyl-tRNAs. Also deacylates mischarged glycyl-tRNA(Ala), protecting cells against glycine mischarging by AlaRS. Acts via tRNA-based rather than protein-based catalysis; rejects L-amino acids rather than detecting D-amino acids in the active site. By recycling D-aminoacyl-tRNA to D-amino acids and free tRNA molecules, this enzyme counteracts the toxicity associated with the formation of D-aminoacyl-tRNA entities in vivo and helps enforce protein L-homochirality. In Thermosipho melanesiensis (strain DSM 12029 / CIP 104789 / BI429), this protein is D-aminoacyl-tRNA deacylase.